The chain runs to 465 residues: GTPase Der (465 aa).

EngA-type G domains follow at residues 3–167 and 179–352; these read PLVA…PEEG and VRIA…ASAT. GTP-binding positions include 9–16, 57–61, 119–122, 185–192, 232–236, and 297–300; these read GRPNVGKS, DTGGI, NKID, DTAGL, and NKWD. Residues 353-437 form the KH-like domain; it reads HEFSTSEVNQ…PVRFIFREGA (85 aa).

The protein belongs to the TRAFAC class TrmE-Era-EngA-EngB-Septin-like GTPase superfamily. EngA (Der) GTPase family. In terms of assembly, associates with the 50S ribosomal subunit.

Its function is as follows. GTPase that plays an essential role in the late steps of ribosome biogenesis. This is GTPase Der from Xanthomonas axonopodis pv. citri (strain 306).